Reading from the N-terminus, the 317-residue chain is Acetyl-coenzyme A carboxylase carboxyl transferase subunit alpha (317 aa).

One can recognise a CoA carboxyltransferase C-terminal domain in the interval 38–292 (TLEERLARLE…DNIIKQSLVE (255 aa)).

The protein belongs to the AccA family. In terms of assembly, acetyl-CoA carboxylase is a heterohexamer composed of biotin carboxyl carrier protein (AccB), biotin carboxylase (AccC) and two subunits each of ACCase subunit alpha (AccA) and ACCase subunit beta (AccD).

The protein localises to the cytoplasm. The catalysed reaction is N(6)-carboxybiotinyl-L-lysyl-[protein] + acetyl-CoA = N(6)-biotinyl-L-lysyl-[protein] + malonyl-CoA. It functions in the pathway lipid metabolism; malonyl-CoA biosynthesis; malonyl-CoA from acetyl-CoA: step 1/1. Functionally, component of the acetyl coenzyme A carboxylase (ACC) complex. First, biotin carboxylase catalyzes the carboxylation of biotin on its carrier protein (BCCP) and then the CO(2) group is transferred by the carboxyltransferase to acetyl-CoA to form malonyl-CoA. The chain is Acetyl-coenzyme A carboxylase carboxyl transferase subunit alpha from Oceanobacillus iheyensis (strain DSM 14371 / CIP 107618 / JCM 11309 / KCTC 3954 / HTE831).